The chain runs to 314 residues: Oxaloacetate tautomerase FAHD2A, mitochondrial (314 aa).

The N-terminal 84 residues, Met1–Leu84, are a transit peptide targeting the mitochondrion. Positions 159, 161, and 190 each coordinate Mg(2+).

Belongs to the FAH family. The cofactor is Mg(2+). Mn(2+) serves as cofactor.

The protein resides in the mitochondrion. The catalysed reaction is oxaloacetate = enol-oxaloacetate. Functionally, tautomerase that converts enol-oxaloacetate, a strong inhibitor of succinate dehydrogenase, to the physiological keto form of oxaloacetate. It is thereby required to maximize aerobic respiration efficiency by preventing succinate dehydrogenase inhibition. The polypeptide is Oxaloacetate tautomerase FAHD2A, mitochondrial (Homo sapiens (Human)).